Reading from the N-terminus, the 218-residue chain is Adenylate kinase (218 aa).

Gly-10–Thr-15 is an ATP binding site. Positions Ser-30–Val-59 are NMP. AMP contacts are provided by residues Thr-31, Arg-36, Gly-57–Val-59, Gly-85–Arg-88, and Gln-92. An LID region spans residues Gly-122–Asp-159. ATP contacts are provided by residues Arg-123 and Val-132 to Tyr-133. Residues Pro-139 to Gln-160 are disordered. AMP-binding residues include Arg-156 and Arg-167. Gly-203 provides a ligand contact to ATP.

This sequence belongs to the adenylate kinase family. As to quaternary structure, monomer.

Its subcellular location is the cytoplasm. The catalysed reaction is AMP + ATP = 2 ADP. It participates in purine metabolism; AMP biosynthesis via salvage pathway; AMP from ADP: step 1/1. Functionally, catalyzes the reversible transfer of the terminal phosphate group between ATP and AMP. Plays an important role in cellular energy homeostasis and in adenine nucleotide metabolism. This is Adenylate kinase from Alcanivorax borkumensis (strain ATCC 700651 / DSM 11573 / NCIMB 13689 / SK2).